The primary structure comprises 546 residues: MAAKDIRFGEDARTRMVRGVNVLANAVKATLGPKGRNVVLEKSFGAPTITKDGVSVAKEIELADKFENMGAQMVKEVASKTNDNAGDGTTTATVLAQALIREGAKAVAAGMNPMDLKRGIDQAVKAAVVELKNISKPTTDDKAIAQVGTISANSDESIGNIIAEAMKKVGKEGVITVEEGSGLENELDVVEGMQFDRGYLSPYFINNQQSQSADLDDPFILLHDKKISNVRDLLPVLEGVAKAGKPLLIVAEEVEGEALATLVVNTIRGIVKVVAVKAPGFGDRRKAMLEDMAVLTGGTVISEEVGLALEKATIKDLGRAKKVQVSKENTTIIDGAGDSAAIESRVGQIKTQIEDTSSDYDREKLQERVAKLAGGVAVIKVGASTEIEMKEKKARVEDALHATRAAVEEGVVPGGGVALVRALVAVGDLKGANEDQTHGIQIALRAMEAPLREIVANAGEEPSVILNKVKEGTGNYGYNAANGEFGDMVEFGILDPTKVTRSALQNAASIAGLMITTEAMVADAPKKDEPALPAGGGMGGMGGMDF.

Residues 30-33 (TLGP), Lys51, 87-91 (DGTTT), Gly415, 479-481 (NAA), and Asp495 each bind ATP.

Belongs to the chaperonin (HSP60) family. In terms of assembly, forms a cylinder of 14 subunits composed of two heptameric rings stacked back-to-back. Interacts with the co-chaperonin GroES.

Its subcellular location is the cytoplasm. The enzyme catalyses ATP + H2O + a folded polypeptide = ADP + phosphate + an unfolded polypeptide.. Functionally, together with its co-chaperonin GroES, plays an essential role in assisting protein folding. The GroEL-GroES system forms a nano-cage that allows encapsulation of the non-native substrate proteins and provides a physical environment optimized to promote and accelerate protein folding. This chain is Chaperonin GroEL, found in Xanthomonas axonopodis pv. citri (strain 306).